A 118-amino-acid chain; its full sequence is Basic phospholipase A2 PA-10A (118 aa).

7 cysteine pairs are disulfide-bonded: Cys-11-Cys-71, Cys-27-Cys-117, Cys-29-Cys-45, Cys-44-Cys-98, Cys-51-Cys-91, Cys-60-Cys-84, and Cys-78-Cys-89. 3 residues coordinate Ca(2+): Tyr-28, Gly-30, and Gly-32. The active site involves His-48. Asp-49 is a binding site for Ca(2+). The active site involves Asp-92.

It belongs to the phospholipase A2 family. Group I subfamily. D49 sub-subfamily. The cofactor is Ca(2+). In terms of tissue distribution, expressed by the venom gland.

It is found in the secreted. The catalysed reaction is a 1,2-diacyl-sn-glycero-3-phosphocholine + H2O = a 1-acyl-sn-glycero-3-phosphocholine + a fatty acid + H(+). In terms of biological role, PLA2 catalyzes the calcium-dependent hydrolysis of the 2-acyl groups in 3-sn-phosphoglycerides. This chain is Basic phospholipase A2 PA-10A, found in Pseudechis australis (Mulga snake).